The sequence spans 261 residues: Neurovirulence factor ICP34.5 (261 aa).

Basic residues predominate over residues 1-17 (MSRRRGPRRRGPRRRPR). The interval 1–19 (MSRRRGPRRRGPRRRPRPG) is required for nucleolar localization. Disordered stretches follow at residues 1 to 59 (MSRR…SAPA), 75 to 135 (DSDD…LALR), and 145 to 164 (RLSLRRRRPPASPPADAPRG). 4 repeats span residues 3-7 (RRRGP), 8-12 (RRRGP), 16-23 (PRPGAPAV), and 24-31 (PRPGAPAV). The segment at 3 to 12 (RRRGPRRRGP) is 2 X 5 AA tandem repeats of R-R-R-G-P. Positions 16–31 (PRPGAPAVPRPGAPAV) are 2 X 8 AA tandem repeats of P-R-P-G-A-P-A-V. Residues 18 to 32 (PGAPAVPRPGAPAVP) show a composition bias toward pro residues. Over residues 75 to 88 (DSDDADYAGNDDAE) the composition is skewed to acidic residues. Positions 101–111 (APEAPHAAPAA) are enriched in low complexity. The Nuclear export signal motif lies at 128 to 137 (LPPHLALRLR). The tract at residues 163-176 (RGKVCFSPRVQVRH) is binding to PP1CA. An interaction with host PPP1CA region spans residues 163–176 (RGKVCFSPRVQVRH). The segment at 178–261 (VAWETAARLA…AAAGPGRRAV (84 aa)) is important for interferon resistance. A Bipartite nuclear localization signal motif is present at residues 188-206 (RRGSWARERADRDRFRRRV). An interaction with host EIF2S1/EIF-2ALPHA region spans residues 206–221 (VAAAEAVIGPCLEPEA). Residues 223–261 (ARARARARAHEDGGPAEEEEAAAAARGSSAAAGPGRRAV) form a disordered region. Residues 244–261 (AAAARGSSAAAGPGRRAV) show a composition bias toward low complexity.

Belongs to the PPP1R15 family. In terms of assembly, interacts with host PPP1CA to form a high-molecular-weight complex that dephosphorylates EIF2S1/eIF-2alpha. Interacts with host EIF2S1/eIF-2alpha; this interaction is crucial for the specific dephosphorylation of EIF2S1/eIF-2alpha by PPP1CA.

Its subcellular location is the host cytoplasm. It is found in the host nucleus. It localises to the host nucleolus. The protein localises to the virion. In terms of biological role, plays essential roles in viral nuclear egress to mediate capsid transit across the nuclear membrane and also in the inhibition of host immune response and integrated stress response (ISR). Facilitates nuclear egress cooperatively with host C1QBP and protein kinase C/PKC to induce lamin A/C phosphorylation and subsequent reorganization. In turn, lamina disassembles and nuclear egress occurs. Recruits the serine/threonine-protein phosphatase PPP1CA/PP1-alpha to dephosphorylate the translation initiation factor EIF2S1/eIF-2alpha, thereby couteracting the host shutoff of protein synthesis involving double-stranded RNA-dependent protein kinase EIF2AK2/PKR. Also down-modulates the host MHC class II proteins cell surface expression. Acts as a neurovirulence factor that has a profound effect on the growth of the virus in central nervous system tissue, probably through its ability to maintain an environment favorable for viral replication. The protein is Neurovirulence factor ICP34.5 (RL1) of Human herpesvirus 2 (strain HG52) (HHV-2).